Consider the following 476-residue polypeptide: Glycogen synthase (476 aa).

Residue lysine 15 coordinates ADP-alpha-D-glucose.

The protein belongs to the glycosyltransferase 1 family. Bacterial/plant glycogen synthase subfamily.

The enzyme catalyses [(1-&gt;4)-alpha-D-glucosyl](n) + ADP-alpha-D-glucose = [(1-&gt;4)-alpha-D-glucosyl](n+1) + ADP + H(+). It functions in the pathway glycan biosynthesis; glycogen biosynthesis. Its function is as follows. Synthesizes alpha-1,4-glucan chains using ADP-glucose. The sequence is that of Glycogen synthase from Streptococcus gordonii (strain Challis / ATCC 35105 / BCRC 15272 / CH1 / DL1 / V288).